The sequence spans 165 residues: MEMFQGLLLLLLLSMGGTWASREMLRPRCRPINATLAVEKEGCPVCITVNTTICAGYCPTMTRVLQGVLPALPQVVCNYRDVRFESIRLPGCPRGVNPVVSYAVALSCQCALCRRSTTDCGGPKDHPLTCDDPRFQASSSSKAPPPSLPSPSRLPGPSDTPILPQ.

The N-terminal stretch at 1–20 is a signal peptide; it reads MEMFQGLLLLLLLSMGGTWA. 6 disulfides stabilise this stretch: Cys-29–Cys-77, Cys-43–Cys-92, Cys-46–Cys-130, Cys-54–Cys-108, Cys-58–Cys-110, and Cys-113–Cys-120. 2 N-linked (GlcNAc...) asparagine glycosylation sites follow: Asn-33 and Asn-50. The segment at 131–165 is disordered; the sequence is DDPRFQASSSSKAPPPSLPSPSRLPGPSDTPILPQ. 4 O-linked (GalNAc...) serine glycosylation sites follow: Ser-141, Ser-147, Ser-152, and Ser-158. Over residues 143 to 154 the composition is skewed to pro residues; sequence APPPSLPSPSRL.

Belongs to the glycoprotein hormones subunit beta family. As to quaternary structure, heterodimer of a common alpha chain identical in LH, FSH, TSH and HCG and a unique beta chain distinct in each of the hormones and confers receptor and biological specificity. In terms of tissue distribution, high expression in the placenta throughout pregnancy.

It is found in the secreted. In terms of biological role, beta subunit of the human chorionic gonadotropin (hCG). hCG is a complex glycoprotein composed of two glycosylated subunits alpha and beta which are non-covalently associated. The alpha subunit is identical to those in the pituitary gonadotropin hormones (LH, FSH and TSH). The beta subunits are distinct in each of the hormones and confer receptor and biological specificity. Has an essential role for pregnancy and maternal adaptation. Stimulates the ovaries to synthesize the steroids that are essential for the maintenance of pregnancy. In Homo sapiens (Human), this protein is Choriogonadotropin subunit beta 7.